Consider the following 327-residue polypeptide: Methionyl-tRNA formyltransferase (327 aa).

121 to 124 (SLLP) is a (6S)-5,6,7,8-tetrahydrofolate binding site.

Belongs to the Fmt family.

The catalysed reaction is L-methionyl-tRNA(fMet) + (6R)-10-formyltetrahydrofolate = N-formyl-L-methionyl-tRNA(fMet) + (6S)-5,6,7,8-tetrahydrofolate + H(+). In terms of biological role, attaches a formyl group to the free amino group of methionyl-tRNA(fMet). The formyl group appears to play a dual role in the initiator identity of N-formylmethionyl-tRNA by promoting its recognition by IF2 and preventing the misappropriation of this tRNA by the elongation apparatus. This Burkholderia ambifaria (strain MC40-6) protein is Methionyl-tRNA formyltransferase.